Consider the following 582-residue polypeptide: External alternative NAD(P)H-ubiquinone oxidoreductase B2, mitochondrial (582 aa).

A mitochondrion-targeting transit peptide spans 1–38 (MRNFSVFERFSKAFKDHPSLTRILVVSTISGGGLIAYS). FAD is bound at residue 60 to 90 (KVVLLGTGWAGTSFLKNLNNSQYEVQIISPR). 223–259 (LHFVVVGGGPTGVEFAAELHDFVTEDLVSLYPRAKGS) is an NAD(+) binding site. The 36-residue stretch at 379–414 (KVMEDVSAIFSKADKDKSGTLTLKEFQEAMDDICVR) folds into the EF-hand domain. Ca(2+) is bound by residues Asp-392, Asp-394, Ser-396, Thr-398, and Glu-403. Residues 573–582 (FIFGRDSSSI) carry the Microbody targeting signal motif.

Belongs to the NADH dehydrogenase family. FAD is required as a cofactor. Mostly expressed in seedlings and roots and, to a lower extent, in cotyledons, leaves, stems, buds and flowers.

It is found in the mitochondrion inner membrane. The protein resides in the peroxisome. It catalyses the reaction a quinone + NADH + H(+) = a quinol + NAD(+). The enzyme catalyses a ubiquinone + NADH + H(+) = a ubiquinol + NAD(+). With respect to regulation, NADPH oxidase activity is stimulated by calcium ions. In terms of biological role, alternative NADH-ubiquinone oxidoreductase which catalyzes the oxidation of mitochondrial NADH does not translocate protons across the inner mitochondrial membrane. Calcium-dependent NAD(P)H dehydrogenase; more efficient on NADH. Binds calcium ions. This Arabidopsis thaliana (Mouse-ear cress) protein is External alternative NAD(P)H-ubiquinone oxidoreductase B2, mitochondrial (NDB2).